Reading from the N-terminus, the 1215-residue chain is DNA-directed RNA polymerase subunit beta' (1215 aa).

Zn(2+)-binding residues include cysteine 60, cysteine 62, cysteine 75, and cysteine 78. Residues aspartate 450, aspartate 452, and aspartate 454 each contribute to the Mg(2+) site. Residues cysteine 819, cysteine 893, cysteine 900, and cysteine 903 each coordinate Zn(2+).

Belongs to the RNA polymerase beta' chain family. In terms of assembly, the RNAP catalytic core consists of 2 alpha, 1 beta, 1 beta' and 1 omega subunit. When a sigma factor is associated with the core the holoenzyme is formed, which can initiate transcription. It depends on Mg(2+) as a cofactor. Zn(2+) is required as a cofactor.

The enzyme catalyses RNA(n) + a ribonucleoside 5'-triphosphate = RNA(n+1) + diphosphate. In terms of biological role, DNA-dependent RNA polymerase catalyzes the transcription of DNA into RNA using the four ribonucleoside triphosphates as substrates. The polypeptide is DNA-directed RNA polymerase subunit beta' (Levilactobacillus brevis (strain ATCC 367 / BCRC 12310 / CIP 105137 / JCM 1170 / LMG 11437 / NCIMB 947 / NCTC 947) (Lactobacillus brevis)).